The sequence spans 280 residues: Phosphatidylglycerol--prolipoprotein diacylglyceryl transferase (280 aa).

The next 4 membrane-spanning stretches (helical) occupy residues 30-50 (WYGL…RRIV), 71-91 (FLLW…ILFY), 106-126 (IWNG…AMII), and 132-152 (AIPI…GLFF). An a 1,2-diacyl-sn-glycero-3-phospho-(1'-sn-glycerol)-binding site is contributed by arginine 154. The next 3 helical transmembrane spans lie at 188-208 (QLYE…WFVY), 217-237 (GLVT…VEFF), and 251-271 (WLTM…WAIA).

The protein belongs to the Lgt family.

It is found in the cell inner membrane. The catalysed reaction is L-cysteinyl-[prolipoprotein] + a 1,2-diacyl-sn-glycero-3-phospho-(1'-sn-glycerol) = an S-1,2-diacyl-sn-glyceryl-L-cysteinyl-[prolipoprotein] + sn-glycerol 1-phosphate + H(+). It participates in protein modification; lipoprotein biosynthesis (diacylglyceryl transfer). Its function is as follows. Catalyzes the transfer of the diacylglyceryl group from phosphatidylglycerol to the sulfhydryl group of the N-terminal cysteine of a prolipoprotein, the first step in the formation of mature lipoproteins. In Sinorhizobium medicae (strain WSM419) (Ensifer medicae), this protein is Phosphatidylglycerol--prolipoprotein diacylglyceryl transferase.